We begin with the raw amino-acid sequence, 208 residues long: 3-demethoxyubiquinol 3-hydroxylase (208 aa).

The Fe cation site is built by Glu57, Glu87, His90, Glu139, Glu171, and His174.

This sequence belongs to the COQ7 family. Fe cation is required as a cofactor.

The protein resides in the cell membrane. The enzyme catalyses a 5-methoxy-2-methyl-3-(all-trans-polyprenyl)benzene-1,4-diol + AH2 + O2 = a 3-demethylubiquinol + A + H2O. It functions in the pathway cofactor biosynthesis; ubiquinone biosynthesis. Functionally, catalyzes the hydroxylation of 2-nonaprenyl-3-methyl-6-methoxy-1,4-benzoquinol during ubiquinone biosynthesis. The protein is 3-demethoxyubiquinol 3-hydroxylase of Burkholderia cenocepacia (strain HI2424).